Here is a 26-residue protein sequence, read N- to C-terminus: Thrombopoietin (26 aa).

It belongs to the EPO/TPO family.

The protein resides in the secreted. In terms of biological role, lineage-specific cytokine affecting the proliferation and maturation of megakaryocytes from their committed progenitor cells. It acts at a late stage of megakaryocyte development. It may be the major physiological regulator of circulating platelets. This is Thrombopoietin (THPO) from Sus scrofa (Pig).